The sequence spans 254 residues: Cyclin homolog (254 aa).

This sequence belongs to the cyclin family. Cyclin D subfamily.

Functionally, may be highly relevant to the process of cellular transformation and rapid T-cell proliferation effected by HVS during latent infections of T-cells in susceptible hosts. The chain is Cyclin homolog (72) from Saimiriine herpesvirus 2 (strain 11) (SaHV-2).